The primary structure comprises 151 residues: D-aminoacyl-tRNA deacylase (151 aa).

The short motif at 137–138 (GP) is the Gly-cisPro motif, important for rejection of L-amino acids element.

It belongs to the DTD family. In terms of assembly, homodimer.

Its subcellular location is the cytoplasm. The enzyme catalyses glycyl-tRNA(Ala) + H2O = tRNA(Ala) + glycine + H(+). It catalyses the reaction a D-aminoacyl-tRNA + H2O = a tRNA + a D-alpha-amino acid + H(+). Functionally, an aminoacyl-tRNA editing enzyme that deacylates mischarged D-aminoacyl-tRNAs. Also deacylates mischarged glycyl-tRNA(Ala), protecting cells against glycine mischarging by AlaRS. Acts via tRNA-based rather than protein-based catalysis; rejects L-amino acids rather than detecting D-amino acids in the active site. By recycling D-aminoacyl-tRNA to D-amino acids and free tRNA molecules, this enzyme counteracts the toxicity associated with the formation of D-aminoacyl-tRNA entities in vivo and helps enforce protein L-homochirality. The sequence is that of D-aminoacyl-tRNA deacylase from Acaryochloris marina (strain MBIC 11017).